The following is a 331-amino-acid chain: Probable allantoicase (331 aa).

It belongs to the allantoicase family.

It catalyses the reaction allantoate + H2O = (S)-ureidoglycolate + urea. Its pathway is nitrogen metabolism; (S)-allantoin degradation; (S)-ureidoglycolate from allantoate (aminidohydrolase route): step 1/1. The protein is Probable allantoicase of Pseudomonas fluorescens (strain ATCC BAA-477 / NRRL B-23932 / Pf-5).